The following is a 258-amino-acid chain: Glycerol-3-phosphate acyltransferase (258 aa).

6 helical membrane passes run 11–31 (IILA…IIIV), 62–82 (LVVA…AILL), 94–114 (SYFI…YYKF), 124–144 (LGLL…IWFI), 160–180 (ALII…YFIW), and 212–232 (WASG…ILAW).

Belongs to the PlsY family. In terms of assembly, probably interacts with PlsX.

It localises to the cell membrane. It carries out the reaction an acyl phosphate + sn-glycerol 3-phosphate = a 1-acyl-sn-glycero-3-phosphate + phosphate. It functions in the pathway lipid metabolism; phospholipid metabolism. Functionally, catalyzes the transfer of an acyl group from acyl-phosphate (acyl-PO(4)) to glycerol-3-phosphate (G3P) to form lysophosphatidic acid (LPA). This enzyme utilizes acyl-phosphate as fatty acyl donor, but not acyl-CoA or acyl-ACP. The protein is Glycerol-3-phosphate acyltransferase of Mycoplasma mycoides subsp. mycoides SC (strain CCUG 32753 / NCTC 10114 / PG1).